Here is a 221-residue protein sequence, read N- to C-terminus: Crossover junction endodeoxyribonuclease RuvC (221 aa).

Residues D12, E73, and D146 contribute to the active site. Residues D12, E73, and D146 each coordinate Mg(2+). Positions 169 to 221 (SQYSEQELEKRRRVQQGKLGKAKSTYNAEQAQSHASDPAKAAHPSQFQRTDTN) are disordered. Residues 192-203 (STYNAEQAQSHA) are compositionally biased toward polar residues.

It belongs to the RuvC family. Homodimer which binds Holliday junction (HJ) DNA. The HJ becomes 2-fold symmetrical on binding to RuvC with unstacked arms; it has a different conformation from HJ DNA in complex with RuvA. In the full resolvosome a probable DNA-RuvA(4)-RuvB(12)-RuvC(2) complex forms which resolves the HJ. Mg(2+) serves as cofactor.

The protein localises to the cytoplasm. The catalysed reaction is Endonucleolytic cleavage at a junction such as a reciprocal single-stranded crossover between two homologous DNA duplexes (Holliday junction).. The RuvA-RuvB-RuvC complex processes Holliday junction (HJ) DNA during genetic recombination and DNA repair. Endonuclease that resolves HJ intermediates. Cleaves cruciform DNA by making single-stranded nicks across the HJ at symmetrical positions within the homologous arms, yielding a 5'-phosphate and a 3'-hydroxyl group; requires a central core of homology in the junction. The consensus cleavage sequence is 5'-(A/T)TT(C/G)-3'. Cleavage occurs on the 3'-side of the TT dinucleotide at the point of strand exchange. HJ branch migration catalyzed by RuvA-RuvB allows RuvC to scan DNA until it finds its consensus sequence, where it cleaves and resolves the cruciform DNA. The polypeptide is Crossover junction endodeoxyribonuclease RuvC (Corynebacterium glutamicum (strain ATCC 13032 / DSM 20300 / JCM 1318 / BCRC 11384 / CCUG 27702 / LMG 3730 / NBRC 12168 / NCIMB 10025 / NRRL B-2784 / 534)).